The primary structure comprises 273 residues: Shikimate dehydrogenase (NADP(+)) (273 aa).

Shikimate is bound by residues 14 to 16 and T61; that span reads SKS. The active-site Proton acceptor is the K65. D77 contributes to the NADP(+) binding site. The shikimate site is built by N86 and D102. NADP(+)-binding positions include 126–130, 150–155, and M213; these read GAGGA and NRTYEK. Residue Y215 participates in shikimate binding. Residue G237 participates in NADP(+) binding.

The protein belongs to the shikimate dehydrogenase family. In terms of assembly, homodimer.

It catalyses the reaction shikimate + NADP(+) = 3-dehydroshikimate + NADPH + H(+). The protein operates within metabolic intermediate biosynthesis; chorismate biosynthesis; chorismate from D-erythrose 4-phosphate and phosphoenolpyruvate: step 4/7. Involved in the biosynthesis of the chorismate, which leads to the biosynthesis of aromatic amino acids. Catalyzes the reversible NADPH linked reduction of 3-dehydroshikimate (DHSA) to yield shikimate (SA). This chain is Shikimate dehydrogenase (NADP(+)), found in Aliivibrio salmonicida (strain LFI1238) (Vibrio salmonicida (strain LFI1238)).